A 661-amino-acid chain; its full sequence is Transmembrane and coiled-coil domain-containing protein STS1 (661 aa).

Disordered stretches follow at residues 34–71 (AHHHHDDDDEEQGRTSTSSGGGGGSSSSSSNSGAGADA) and 154–185 (VGNTIKGGDQDALPSSSGTDKSPGESSHDDQL). Over residues 59 to 69 (SSSSSNSGAGA) the composition is skewed to low complexity. Residues 175–184 (SPGESSHDDQ) are compositionally biased toward basic and acidic residues. 4 consecutive transmembrane segments (helical) span residues 306-326 (ALLAITGGLAAPAIAAGFGAL), 333-353 (LVPVIGASGFAAMATAAGSVA), 355-375 (SVAVAASFGAAGAGLTGSKMA), and 466-486 (LSGLLAAFAWPATLLAATDFI).

It belongs to the TMCO4 family. As to quaternary structure, interacts with PKS10/PKS2 and 4CLL9/ACOS12.

The protein localises to the endoplasmic reticulum membrane. Functionally, involved in anther lipids biosynthesis and is required for tapetum degradation and pollen wall formation. Required for the formation of Ubisch bodies and microspores. Possesses lipase activity in vitro toward two synthetic substrates, p-nitrophenyl acetate (pNPA) and p-nitrophenyl butyrate (pNPB). The protein is Transmembrane and coiled-coil domain-containing protein STS1 of Oryza sativa subsp. japonica (Rice).